The primary structure comprises 203 residues: Glycerol-3-phosphate acyltransferase (203 aa).

5 helical membrane-spanning segments follow: residues 6–26, 56–76, 82–102, 118–138, and 141–161; these read LTLAMILTAYLAGSISSAVLV, AAAMVLLFDMLKGAVPAYVAF, AVSLGVIAIAACLGHIFPIFF, APIGADLSLALIATWVIVVLI, and YSSLAAIVTALLAPAYTWYFD.

It belongs to the PlsY family. In terms of assembly, probably interacts with PlsX.

Its subcellular location is the cell inner membrane. It catalyses the reaction an acyl phosphate + sn-glycerol 3-phosphate = a 1-acyl-sn-glycero-3-phosphate + phosphate. The protein operates within lipid metabolism; phospholipid metabolism. Its function is as follows. Catalyzes the transfer of an acyl group from acyl-phosphate (acyl-PO(4)) to glycerol-3-phosphate (G3P) to form lysophosphatidic acid (LPA). This enzyme utilizes acyl-phosphate as fatty acyl donor, but not acyl-CoA or acyl-ACP. This Shewanella loihica (strain ATCC BAA-1088 / PV-4) protein is Glycerol-3-phosphate acyltransferase.